The sequence spans 470 residues: Zinc finger CCCH domain-containing protein 7 (470 aa).

The tract at residues 122–144 is disordered; it reads AYSKKESEKQSGQNNTSTASRNH. Residues 131–142 are compositionally biased toward polar residues; sequence QSGQNNTSTASR. C3H1-type zinc fingers lie at residues 240–269, 273–294, 295–321, 322–349, and 350–372; these read AKKKKYCQFFTRFGKCNKDDGKCPYVHDPS, VCTKFLNGLCANANCKLTHKVI, PERMPDCSYYLQGLCNNEACPYRHVHV, NPIAPICDGFLKGYCSEGDECRKKHSYN, and CPVFEATGSCSQGLKCKLHHPKN. The segment covering 370-381 has biased composition (basic residues); that stretch reads PKNQSKGRKRKR. The interval 370–389 is disordered; sequence PKNQSKGRKRKRTNEPSQKN.

Functionally, possesses RNA-binding and ribonuclease activities in vitro. In Arabidopsis thaliana (Mouse-ear cress), this protein is Zinc finger CCCH domain-containing protein 7.